A 643-amino-acid chain; its full sequence is 3D-(3,5/4)-trihydroxycyclohexane-1,2-dione hydrolase (643 aa).

Glu-65 is a binding site for thiamine diphosphate. A thiamine pyrophosphate binding region spans residues 441 to 521 (SLPGDLQRMW…VNVLLFDNCG (81 aa)). Residues Asp-492 and Asn-519 each contribute to the Mg(2+) site.

This sequence belongs to the TPP enzyme family. Requires Mg(2+) as cofactor. Thiamine diphosphate is required as a cofactor.

It catalyses the reaction 3D-3,5/4-trihydroxycyclohexane-1,2-dione + H2O = 5-deoxy-D-glucuronate + H(+). It participates in polyol metabolism; myo-inositol degradation into acetyl-CoA; acetyl-CoA from myo-inositol: step 3/7. Its function is as follows. Involved in the cleavage of the C1-C2 bond of 3D-(3,5/4)-trihydroxycyclohexane-1,2-dione (THcHDO) to yield 5-deoxy-glucuronate (5DG). The sequence is that of 3D-(3,5/4)-trihydroxycyclohexane-1,2-dione hydrolase from Clostridium botulinum (strain Alaska E43 / Type E3).